Reading from the N-terminus, the 273-residue chain is MDIVEIIKAIILGMVEGLTEFAPVSSTGHMIIVDDMWLKSQEFLGKYAANTFKVVIQLGSILAVVVVFKDRFIDLLGLRGRHRDGKPRLKLMQVIVGLIPAGVLGVLFEDYIDEHLFSTATVLIGLVLGALLMIAADVFAKKAPKAQTVDQITYKQALIVGLVQCLSLWPGFSRSGSTISGGVLVGMSHRAAADFTFIMAVPIMMGASVLSLLKNWQYFTIDALPFFTAGFISAFLFALISIRFFLKLINQIRLVPFAVYRIVLALVIYIVYF.

8 helical membrane-spanning segments follow: residues 3–23 (IVEIIKAIILGMVEGLTEFAP), 48–68 (AANTFKVVIQLGSILAVVVVF), 92–112 (MQVIVGLIPAGVLGVLFEDYI), 116–136 (LFSTATVLIGLVLGALLMIAA), 152–172 (ITYKQALIVGLVQCLSLWPGF), 193–213 (ADFTFIMAVPIMMGASVLSLL), 220–240 (TIDALPFFTAGFISAFLFALI), and 252–272 (IRLVPFAVYRIVLALVIYIVY).

Belongs to the UppP family.

It is found in the cell membrane. It carries out the reaction di-trans,octa-cis-undecaprenyl diphosphate + H2O = di-trans,octa-cis-undecaprenyl phosphate + phosphate + H(+). In terms of biological role, catalyzes the dephosphorylation of undecaprenyl diphosphate (UPP). Confers resistance to bacitracin. This chain is Undecaprenyl-diphosphatase, found in Geobacillus sp. (strain WCH70).